The sequence spans 73 residues: Large ribosomal subunit protein bL28 (73 aa).

Belongs to the bacterial ribosomal protein bL28 family.

This chain is Large ribosomal subunit protein bL28, found in Anaeromyxobacter dehalogenans (strain 2CP-1 / ATCC BAA-258).